The following is a 285-amino-acid chain: 2-dehydro-3-deoxyphosphooctonate aldolase (285 aa).

It belongs to the KdsA family.

It localises to the cytoplasm. The enzyme catalyses D-arabinose 5-phosphate + phosphoenolpyruvate + H2O = 3-deoxy-alpha-D-manno-2-octulosonate-8-phosphate + phosphate. It functions in the pathway carbohydrate biosynthesis; 3-deoxy-D-manno-octulosonate biosynthesis; 3-deoxy-D-manno-octulosonate from D-ribulose 5-phosphate: step 2/3. Its pathway is bacterial outer membrane biogenesis; lipopolysaccharide biosynthesis. This is 2-dehydro-3-deoxyphosphooctonate aldolase from Variovorax paradoxus (strain S110).